Here is a 230-residue protein sequence, read N- to C-terminus: Sugar fermentation stimulation protein homolog (230 aa).

The protein belongs to the SfsA family.

The chain is Sugar fermentation stimulation protein homolog from Ruegeria pomeroyi (strain ATCC 700808 / DSM 15171 / DSS-3) (Silicibacter pomeroyi).